The following is a 118-amino-acid chain: NADH-ubiquinone oxidoreductase chain 3 (118 aa).

2 helical membrane passes run 7-27 and 87-107; these read ICIYLVISPLVSLIPLGLPFL and IDPFGSWSMMAFLLILTIGSL.

It belongs to the complex I subunit 3 family.

It localises to the mitochondrion membrane. It carries out the reaction a ubiquinone + NADH + 5 H(+)(in) = a ubiquinol + NAD(+) + 4 H(+)(out). Functionally, core subunit of the mitochondrial membrane respiratory chain NADH dehydrogenase (Complex I) that is believed to belong to the minimal assembly required for catalysis. Complex I functions in the transfer of electrons from NADH to the respiratory chain. The immediate electron acceptor for the enzyme is believed to be ubiquinone. The chain is NADH-ubiquinone oxidoreductase chain 3 (ND3) from Solanum tuberosum (Potato).